A 313-amino-acid polypeptide reads, in one-letter code: T-box protein 37 (313 aa).

A DNA-binding region (T-box) is located at residues 19-195; that stretch reads IWEKFYPKTE…HNKFASGFRS (177 aa). Residues 193–228 are disordered; the sequence is FRSNGKRRLSSESENSENSPPKRSASAISSLTPPAI.

It localises to the nucleus. In terms of biological role, transcription factor. Required for mesodermal induction, acting redundantly with transcription factor tbx-38. Together with tbx-38, acts by inducing cell fates in the AB lineage, thereby playing a role in development of the anterior pharynx. This chain is T-box protein 37 (tbx-37), found in Caenorhabditis elegans.